The sequence spans 340 residues: Protein-arginine kinase (340 aa).

Positions 21 to 242 (VVLSSRIRLA…EQIIMQERVA (222 aa)) constitute a Phosphagen kinase C-terminal domain. Residues 24-28 (SSRIR), His79, Arg113, 164-168 (RASVM), and 195-200 (RGIYGE) contribute to the ATP site.

This sequence belongs to the ATP:guanido phosphotransferase family.

It catalyses the reaction L-arginyl-[protein] + ATP = N(omega)-phospho-L-arginyl-[protein] + ADP + H(+). Functionally, catalyzes the specific phosphorylation of arginine residues in proteins. This chain is Protein-arginine kinase, found in Listeria monocytogenes serotype 4b (strain F2365).